Consider the following 303-residue polypeptide: Recombination-associated protein RdgC (303 aa).

Belongs to the RdgC family.

It is found in the cytoplasm. Its subcellular location is the nucleoid. Its function is as follows. May be involved in recombination. The polypeptide is Recombination-associated protein RdgC (Shewanella sediminis (strain HAW-EB3)).